The sequence spans 510 residues: NAD(P)H-quinone oxidoreductase subunit 2, chloroplastic (510 aa).

Transmembrane regions (helical) follow at residues 24 to 44, 59 to 79, 99 to 119, 124 to 144, 149 to 169, 183 to 203, 295 to 315, 323 to 343, 347 to 367, 395 to 415, and 418 to 438; these read LLLF…GLIL, WFYF…LFRW, IFQF…VEYI, MAIT…MFLC, LITI…LSGY, YLLM…WLYG, WHLL…LIAI, MLAY…IVGD, GYAS…GTFA, ALSS…AGFF, and LYLF…IGLL.

This sequence belongs to the complex I subunit 2 family. NDH is composed of at least 16 different subunits, 5 of which are encoded in the nucleus.

Its subcellular location is the plastid. It localises to the chloroplast thylakoid membrane. The catalysed reaction is a plastoquinone + NADH + (n+1) H(+)(in) = a plastoquinol + NAD(+) + n H(+)(out). The enzyme catalyses a plastoquinone + NADPH + (n+1) H(+)(in) = a plastoquinol + NADP(+) + n H(+)(out). Its function is as follows. NDH shuttles electrons from NAD(P)H:plastoquinone, via FMN and iron-sulfur (Fe-S) centers, to quinones in the photosynthetic chain and possibly in a chloroplast respiratory chain. The immediate electron acceptor for the enzyme in this species is believed to be plastoquinone. Couples the redox reaction to proton translocation, and thus conserves the redox energy in a proton gradient. The polypeptide is NAD(P)H-quinone oxidoreductase subunit 2, chloroplastic (Asparagus officinalis (Garden asparagus)).